A 159-amino-acid polypeptide reads, in one-letter code: Ribosome maturation factor RimP (159 aa).

This sequence belongs to the RimP family.

It localises to the cytoplasm. Required for maturation of 30S ribosomal subunits. The sequence is that of Ribosome maturation factor RimP from Trichlorobacter lovleyi (strain ATCC BAA-1151 / DSM 17278 / SZ) (Geobacter lovleyi).